We begin with the raw amino-acid sequence, 1006 residues long: UPF0182 protein Arth_2749 (1006 aa).

7 helical membrane passes run 18 to 38, 64 to 84, 115 to 135, 168 to 188, 211 to 231, 260 to 280, and 287 to 307; these read GALT…IFFA, IIIF…AIRI, VVMI…AASQ, FLGF…IAGI, QIHL…NFWL, SILA…AVIG, and IGTA…PWVI. Disordered regions lie at residues 490–519, 896–923, and 975–1006; these read GAPE…FTGN, KAGD…GGTD, and LGSE…SPSN. Over residues 495 to 509 the composition is skewed to basic and acidic residues; the sequence is SPHREQDRPAGKEGD. Composition is skewed to low complexity over residues 911 to 923 and 979 to 1000; these read AGGS…GGTD and GASP…AATP.

Belongs to the UPF0182 family.

The protein resides in the cell membrane. The sequence is that of UPF0182 protein Arth_2749 from Arthrobacter sp. (strain FB24).